We begin with the raw amino-acid sequence, 294 residues long: RAB7A-interacting MON1-CCZ1 complex subunit 1 (294 aa).

An N-acetylalanine modification is found at Ala2.

This sequence belongs to the RIMOC1 family. In terms of assembly, interacts with the MON1A-CCZ1B complex. Interacts with GDP-bound RAB7A and promotes its interaction with the MON1A-CCZ1B complex.

It localises to the cytoplasm. The protein resides in the cytosol. Plays an important role in the removal of damaged mitochondria via mitophagy by controlling the stability and localization of RAB7A. Required for the recruitment of RAB7A and ATG9A vesicles to damaged mitochondria and promotes the stability of RAB7A by inhibiting its proteasomal degradation during mitophagy. This is RAB7A-interacting MON1-CCZ1 complex subunit 1 from Homo sapiens (Human).